A 60-amino-acid polypeptide reads, in one-letter code: Large ribosomal subunit protein uL30 (60 aa).

This sequence belongs to the universal ribosomal protein uL30 family. In terms of assembly, part of the 50S ribosomal subunit.

The chain is Large ribosomal subunit protein uL30 from Azoarcus sp. (strain BH72).